Reading from the N-terminus, the 315-residue chain is Ribose-phosphate pyrophosphokinase (315 aa).

Residues Asp37 to Glu39 and Arg96 to Gln97 contribute to the ATP site. 2 residues coordinate Mg(2+): His131 and Asp170. The active site involves Lys194. Residues Arg196, Asp220, and Asp224 to Thr228 each bind D-ribose 5-phosphate.

The protein belongs to the ribose-phosphate pyrophosphokinase family. Class I subfamily. In terms of assembly, homohexamer. The cofactor is Mg(2+).

Its subcellular location is the cytoplasm. It carries out the reaction D-ribose 5-phosphate + ATP = 5-phospho-alpha-D-ribose 1-diphosphate + AMP + H(+). Its pathway is metabolic intermediate biosynthesis; 5-phospho-alpha-D-ribose 1-diphosphate biosynthesis; 5-phospho-alpha-D-ribose 1-diphosphate from D-ribose 5-phosphate (route I): step 1/1. Its function is as follows. Involved in the biosynthesis of the central metabolite phospho-alpha-D-ribosyl-1-pyrophosphate (PRPP) via the transfer of pyrophosphoryl group from ATP to 1-hydroxyl of ribose-5-phosphate (Rib-5-P). This is Ribose-phosphate pyrophosphokinase from Buchnera aphidicola subsp. Schizaphis graminum (strain Sg).